An 805-amino-acid chain; its full sequence is Acetyl-CoA decarbonylase/synthase complex subunit alpha 3 (805 aa).

Positions 72, 75, 76, 78, 83, and 93 each coordinate [4Fe-4S] cluster. Residue His-116 coordinates CO. 3 residues coordinate [Ni-4Fe-4S] cluster: His-249, Cys-277, and Cys-322. 4Fe-4S ferredoxin-type domains follow at residues Glu-407–Ala-435 and Glu-445–Leu-474. 8 residues coordinate [4Fe-4S] cluster: Cys-416, Cys-419, Cys-422, Cys-426, Cys-454, Cys-457, Cys-460, and Cys-464. [Ni-4Fe-4S] cluster-binding residues include Cys-522, Cys-551, and Cys-586.

It belongs to the Ni-containing carbon monoxide dehydrogenase family. Heterotetramer of two alpha and two epsilon subunits. The ACDS complex is made up of alpha, epsilon, beta, gamma and delta subunits with a probable stoichiometry of (alpha(2)epsilon(2))(4)-beta(8)-(gamma(1)delta(1))(8). The cofactor is [4Fe-4S] cluster. [Ni-4Fe-4S] cluster is required as a cofactor.

It catalyses the reaction CO + 2 oxidized [2Fe-2S]-[ferredoxin] + H2O = 2 reduced [2Fe-2S]-[ferredoxin] + CO2 + 2 H(+). It participates in one-carbon metabolism; methanogenesis from acetate. Part of the ACDS complex that catalyzes the reversible cleavage of acetyl-CoA, allowing growth on acetate as sole source of carbon and energy. The alpha-epsilon subcomponent functions as a carbon monoxide dehydrogenase. The polypeptide is Acetyl-CoA decarbonylase/synthase complex subunit alpha 3 (Methanosarcina acetivorans (strain ATCC 35395 / DSM 2834 / JCM 12185 / C2A)).